The chain runs to 315 residues: Porphobilinogen deaminase (315 aa).

C242 carries the S-(dipyrrolylmethanemethyl)cysteine modification.

It belongs to the HMBS family. Monomer. It depends on dipyrromethane as a cofactor.

The catalysed reaction is 4 porphobilinogen + H2O = hydroxymethylbilane + 4 NH4(+). The protein operates within porphyrin-containing compound metabolism; protoporphyrin-IX biosynthesis; coproporphyrinogen-III from 5-aminolevulinate: step 2/4. Tetrapolymerization of the monopyrrole PBG into the hydroxymethylbilane pre-uroporphyrinogen in several discrete steps. The chain is Porphobilinogen deaminase from Syntrophotalea carbinolica (strain DSM 2380 / NBRC 103641 / GraBd1) (Pelobacter carbinolicus).